We begin with the raw amino-acid sequence, 79 residues long: Acyl carrier protein 2 (79 aa).

Positions 2-77 (DDIETRVRKL…QAIDYLEEAV (76 aa)) constitute a Carrier domain. Ser37 is subject to O-(pantetheine 4'-phosphoryl)serine.

It belongs to the acyl carrier protein (ACP) family. Post-translationally, 4'-phosphopantetheine is transferred from CoA to a specific serine of apo-ACP by AcpS. This modification is essential for activity because fatty acids are bound in thioester linkage to the sulfhydryl of the prosthetic group.

Its subcellular location is the cytoplasm. It participates in lipid metabolism; fatty acid biosynthesis. In terms of biological role, carrier of the growing fatty acid chain in fatty acid biosynthesis. The protein is Acyl carrier protein 2 of Pseudomonas aeruginosa (strain ATCC 15692 / DSM 22644 / CIP 104116 / JCM 14847 / LMG 12228 / 1C / PRS 101 / PAO1).